The primary structure comprises 553 residues: tRNA pseudouridine synthase 1 (553 aa).

The tract at residues 1–78 (MSEEQNLRPV…ETRSKDKDES (78 aa)) is disordered. Composition is skewed to basic and acidic residues over residues 33 to 51 (RKAD…KPND) and 64 to 78 (SNEK…KDES). Asp-158 functions as the Nucleophile in the catalytic mechanism. Residues 517-539 (DLEQKAPSDPTPSDEKGKKPQRP) are disordered.

This sequence belongs to the tRNA pseudouridine synthase TruA family. Zn(2+) is required as a cofactor.

The protein resides in the nucleus. The enzyme catalyses a uridine in tRNA = a pseudouridine in tRNA. It catalyses the reaction uridine in snRNA = pseudouridine in snRNA. The catalysed reaction is a uridine in mRNA = a pseudouridine in mRNA. Functionally, formation of pseudouridine at positions 27 and 28 in the anticodon stem and loop of transfer RNAs; at positions 34 and 36 of intron-containing precursor tRNA(Ile) and at position 35 in the intron-containing tRNA(Tyr). Catalyzes pseudouridylation at position 44 in U2 snRNA. Also catalyzes pseudouridylation of mRNAs. This chain is tRNA pseudouridine synthase 1 (PUS1), found in Kluyveromyces lactis (strain ATCC 8585 / CBS 2359 / DSM 70799 / NBRC 1267 / NRRL Y-1140 / WM37) (Yeast).